The sequence spans 259 residues: Triosephosphate isomerase (259 aa).

10 to 12 (NWK) contacts substrate. The active-site Electrophile is the His-100. Glu-172 (proton acceptor) is an active-site residue. Substrate-binding positions include Gly-178, Ser-218, and 239–240 (GG).

The protein belongs to the triosephosphate isomerase family. In terms of assembly, homodimer.

The protein resides in the cytoplasm. The enzyme catalyses D-glyceraldehyde 3-phosphate = dihydroxyacetone phosphate. It participates in carbohydrate biosynthesis; gluconeogenesis. It functions in the pathway carbohydrate degradation; glycolysis; D-glyceraldehyde 3-phosphate from glycerone phosphate: step 1/1. In terms of biological role, involved in the gluconeogenesis. Catalyzes stereospecifically the conversion of dihydroxyacetone phosphate (DHAP) to D-glyceraldehyde-3-phosphate (G3P). The chain is Triosephosphate isomerase from Corynebacterium glutamicum (strain ATCC 13032 / DSM 20300 / JCM 1318 / BCRC 11384 / CCUG 27702 / LMG 3730 / NBRC 12168 / NCIMB 10025 / NRRL B-2784 / 534).